We begin with the raw amino-acid sequence, 467 residues long: DNA methyltransferase 1-associated protein 1 (467 aa).

Basic and acidic residues-rich tracts occupy residues 1 to 11 (MATGADVRDIL) and 26 to 48 (SKKD…LTFK). A disordered region spans residues 1–48 (MATGADVRDILELGGPEGDAASGTISKKDIINPDKKKSKKSSETLTFK). Lysine 27 participates in a covalent cross-link: Glycyl lysine isopeptide (Lys-Gly) (interchain with G-Cter in SUMO2). The region spanning 149–199 (DDAWTKAETDHLFDLSRRFDLRFVVIHDRYDHQQFKKRSVEDLKERYYHIC) is the SANT domain. Residue lysine 214 forms a Glycyl lysine isopeptide (Lys-Gly) (interchain with G-Cter in SUMO2) linkage. Residues 225-275 (RRKEQLERLYNRTPEQVAEEEYLLQELRKIEARKKEREKRSQDLQKLITAA) are a coiled coil. A compositionally biased stretch (basic and acidic residues) spans 258-267 (KKEREKRSQD). Disordered stretches follow at residues 258 to 305 (KKER…PAVP) and 404 to 467 (LGGP…AKKP). Over residues 406–422 (GPATPASGPGPASAEPA) the composition is skewed to low complexity. Residue threonine 445 is modified to Phosphothreonine. Phosphoserine is present on serine 448.

In terms of assembly, component of the NuA4 histone acetyltransferase complex which contains the catalytic subunit KAT5/TIP60 and the subunits EP400, TRRAP/PAF400, BRD8/SMAP, EPC1, DMAP1/DNMAP1, RUVBL1/TIP49, RUVBL2, ING3, actin, ACTL6A/BAF53A, MORF4L1/MRG15, MORF4L2/MRGX, MRGBP, YEATS4/GAS41, VPS72/YL1 and MEAF6. Component of a NuA4-related complex which contains EP400, TRRAP/PAF400, SRCAP, BRD8/SMAP, EPC1, DMAP1/DNMAP1, RUVBL1/TIP49, RUVBL2, actin, ACTL6A/BAF53A, VPS72 and YEATS4/GAS41. DMAP1 also forms a complex with DNMT1 and HDAC2. Throughout S phase it interacts directly with the N-terminus of DNMT1, which serves to recruit DMAP1 to replication foci. DMAP1 interacts with ING1, a component of the mSin3A transcription repressor complex, although this interaction is not required for recruitment of ING1 to heterochromatin. Interacts directly with the transcriptional corepressor TSG101. Interacts with the pro-apoptotic protein DAXX. Interacts with URI1.

It localises to the nucleus. Its subcellular location is the cytoplasm. Functionally, involved in transcription repression and activation. Its interaction with HDAC2 may provide a mechanism for histone deacetylation in heterochromatin following replication of DNA at late firing origins. Can also repress transcription independently of histone deacetylase activity. May specifically potentiate DAXX-mediated repression of glucocorticoid receptor-dependent transcription. Component of the NuA4 histone acetyltransferase (HAT) complex which is involved in transcriptional activation of select genes principally by acetylation of nucleosomal histones H4 and H2A. This modification may both alter nucleosome - DNA interactions and promote interaction of the modified histones with other proteins which positively regulate transcription. This complex may be required for the activation of transcriptional programs associated with oncogene and proto-oncogene mediated growth induction, tumor suppressor mediated growth arrest and replicative senescence, apoptosis, and DNA repair. NuA4 may also play a direct role in DNA repair when recruited to sites of DNA damage. Participates in the nuclear localization of URI1 and increases its transcriptional corepressor activity. The polypeptide is DNA methyltransferase 1-associated protein 1 (DMAP1) (Homo sapiens (Human)).